We begin with the raw amino-acid sequence, 6995 residues long: Fibrous sheath-interacting protein 2 (6995 aa).

Disordered regions lie at residues 273–292, 308–336, and 351–476; these read EQKI…RKKQ, DTGL…SSKK, and GDQK…TDAP. Polar residues predominate over residues 359 to 396; it reads TSGQVSATVNQSQSSSKDVTKVSASSVTYPAEVQNSSS. A compositionally biased stretch (basic and acidic residues) spans 397-421; it reads EQKRSEVTKRLSDERGKNSTDDSAR. The span at 424 to 442 shows a compositional bias: polar residues; the sequence is IISTQLSPTRNAKLSQISL. Position 430 is a phosphoserine (serine 430). A compositionally biased stretch (basic and acidic residues) spans 443-452; it reads DHQKEEKEMK. Polar residues predominate over residues 453-463; that stretch reads STWNGGLSKKS. Residues 665-692 adopt a coiled-coil conformation; it reads LEISLLYDKKAKAMDQIKNLKNVFVNFK. Disordered stretches follow at residues 1452 to 1472, 2554 to 2595, 2699 to 2731, 3182 to 3270, 5489 to 5665, 5719 to 5740, 5823 to 5878, 5943 to 5996, and 6973 to 6995; these read PDPQ…DPPT, KSKR…VPQM, TKTK…TPQV, PVKM…PNFT, GPSA…KYKG, SKSS…MTEK, KDLS…SKSK, KEDE…PDKL, and SKVF…QDKR. Residues 2555 to 2565 are compositionally biased toward basic and acidic residues; the sequence is SKREGEMHDSS. The segment covering 3187-3204 has biased composition (polar residues); it reads PSNTSDTPRTRRSSQGSV. Over residues 3220–3231 the composition is skewed to low complexity; sequence SVTSNSSSHISS. The span at 3232-3250 shows a compositional bias: polar residues; the sequence is CVENTNKSLEPMGRSNSEA. The span at 3255–3265 shows a compositional bias: basic residues; the sequence is SRHKAHDHGQR. Residues 5496–5509 show a composition bias toward basic and acidic residues; sequence DAKKEDESKVKPAT. Composition is skewed to polar residues over residues 5523-5557, 5565-5625, and 5638-5650; these read MKSQ…SPPT, QVQQ…QSAM, and VQES…TTMK. 2 stretches are compositionally biased toward basic and acidic residues: residues 5719–5738 and 5829–5877; these read SKSS…ETMT and GHRD…ESKS. Polar residues predominate over residues 5982–5993; the sequence is SDVQKTPEQSSP. Residues 6977-6995 are compositionally biased toward low complexity; that stretch reads SRSSGSIPKSSSPPHQDKR.

In terms of assembly, may interact with AKAP4. As to expression, predominantly expressed in testis.

Its function is as follows. Plays a role in spermatogenesis. The protein is Fibrous sheath-interacting protein 2 (Fsip2) of Mus musculus (Mouse).